The sequence spans 151 residues: UPF0756 membrane protein Dred_1097 (151 aa).

A run of 4 helical transmembrane segments spans residues 6-26 (IILLSLILMGYLAESALLATA), 52-72 (VGLIFLMLSVLVPLAHDNIVY), 75-95 (LVMKTLSPQGLLALIGGTLAT), and 111-131 (LIFGMVIGSLIGIVFLGGIPI).

The protein belongs to the UPF0756 family.

The protein resides in the cell membrane. In Desulforamulus reducens (strain ATCC BAA-1160 / DSM 100696 / MI-1) (Desulfotomaculum reducens), this protein is UPF0756 membrane protein Dred_1097.